Here is a 334-residue protein sequence, read N- to C-terminus: tRNA dimethylallyltransferase (334 aa).

23 to 30 (GPTGAGKT) contacts ATP. A substrate-binding site is contributed by 25 to 30 (TGAGKT). Interaction with substrate tRNA stretches follow at residues 53–56 (DSAL) and 177–181 (QRVQR).

The protein belongs to the IPP transferase family. Monomer. Mg(2+) is required as a cofactor.

It carries out the reaction adenosine(37) in tRNA + dimethylallyl diphosphate = N(6)-dimethylallyladenosine(37) in tRNA + diphosphate. Functionally, catalyzes the transfer of a dimethylallyl group onto the adenine at position 37 in tRNAs that read codons beginning with uridine, leading to the formation of N6-(dimethylallyl)adenosine (i(6)A). This chain is tRNA dimethylallyltransferase, found in Polynucleobacter necessarius subsp. necessarius (strain STIR1).